A 304-amino-acid polypeptide reads, in one-letter code: Porphobilinogen deaminase (304 aa).

Cys-240 is modified (S-(dipyrrolylmethanemethyl)cysteine).

This sequence belongs to the HMBS family. Monomer. Dipyrromethane is required as a cofactor.

It carries out the reaction 4 porphobilinogen + H2O = hydroxymethylbilane + 4 NH4(+). It functions in the pathway porphyrin-containing compound metabolism; protoporphyrin-IX biosynthesis; coproporphyrinogen-III from 5-aminolevulinate: step 2/4. In terms of biological role, tetrapolymerization of the monopyrrole PBG into the hydroxymethylbilane pre-uroporphyrinogen in several discrete steps. This Xanthomonas campestris pv. campestris (strain B100) protein is Porphobilinogen deaminase.